The sequence spans 456 residues: Major facilitator superfamily domain-containing protein 10 (456 aa).

The next 11 helical transmembrane spans lie at valine 25–proline 45, valine 87–leucine 107, leucine 125–leucine 145, valine 149–glycine 169, alanine 179–leucine 199, valine 204–proline 224, leucine 278–valine 298, lysine 311–alanine 328, alanine 343–leucine 363, leucine 365–valine 385, and leucine 422–isoleucine 442.

Belongs to the major facilitator superfamily.

Its subcellular location is the nucleus inner membrane. The protein resides in the cell membrane. Probable organic anion transporter which may serve as a transporter for some non-steroidal anti-inflammatory drugs (NSAIDs) as well as other organic anions across the luminal membranes of renal proximal tubules at the final excretion step into the urine. The polypeptide is Major facilitator superfamily domain-containing protein 10 (MFSD10) (Bos taurus (Bovine)).